A 143-amino-acid polypeptide reads, in one-letter code: Peptidyl-prolyl cis-trans isomerase B (143 aa).

The 143-residue stretch at Met-1 to Gly-143 folds into the PPIase cyclophilin-type domain.

This sequence belongs to the cyclophilin-type PPIase family.

Its subcellular location is the cytoplasm. It catalyses the reaction [protein]-peptidylproline (omega=180) = [protein]-peptidylproline (omega=0). Inhibited by cyclosporin A (CsA). PPIases accelerate the folding of proteins. It catalyzes the cis-trans isomerization of proline imidic peptide bonds in oligopeptides. The chain is Peptidyl-prolyl cis-trans isomerase B (ppiB) from Bacillus subtilis (strain 168).